We begin with the raw amino-acid sequence, 1138 residues long: Lysylphosphatidylglycerol biosynthesis bifunctional protein LysX (1138 aa).

Over residues 1–15 (MALDTPSSDLPVSTD) the composition is skewed to polar residues. The interval 1 to 34 (MALDTPSSDLPVSTDDTAEHQPTPAHRPPSAADR) is disordered. The tract at residues 1-646 (MALDTPSSDL…LIAQLESEED (646 aa)) is phosphatidylglycerol lysyltransferase. Helical transmembrane passes span 56 to 76 (IAGTVVGVLAGIALLSSIFPL), 92 to 112 (IVSLPNTSLAWAFVLALVAIA), 119 to 139 (IAWWIATIYLVLFMVSNALLL), 155 to 175 (IQIWIGLGIDAAALIFLIVTY), 190 to 210 (ALGVLIVGLTAATLVGWGLVW), and 247 to 267 (IVIDSALGLLGALALIAAATV). Positions 647–1138 (RTAVEVHRPE…AFPMVKPTDA (492 aa)) are lysine--tRNA ligase. A DNA-binding region (OB) is located at residues 698–772 (VTIAGRVTKM…GELSVLIDAW (75 aa)). Positions 1048 and 1055 each coordinate Mg(2+).

This sequence in the N-terminal section; belongs to the LPG synthetase family. The protein in the C-terminal section; belongs to the class-II aminoacyl-tRNA synthetase family. The cofactor is Mg(2+).

The protein localises to the cell membrane. The enzyme catalyses tRNA(Lys) + L-lysine + ATP = L-lysyl-tRNA(Lys) + AMP + diphosphate. The catalysed reaction is L-lysyl-tRNA(Lys) + a 1,2-diacyl-sn-glycero-3-phospho-(1'-sn-glycerol) = a 1,2-diacyl-sn-glycero-3-phospho-1'-(3'-O-L-lysyl)-sn-glycerol + tRNA(Lys). Catalyzes the production of L-lysyl-tRNA(Lys)transfer and the transfer of a lysyl group from L-lysyl-tRNA(Lys) to membrane-bound phosphatidylglycerol (PG), which produces lysylphosphatidylglycerol (LPG), one of the components of the bacterial membrane with a positive net charge. LPG synthesis contributes to the resistance to cationic antimicrobial peptides (CAMPs) and likely protects M.tuberculosis against the CAMPs produced by competiting microorganisms (bacteriocins). In fact, the modification of anionic phosphatidylglycerol with positively charged L-lysine results in repulsion of the peptides. The sequence is that of Lysylphosphatidylglycerol biosynthesis bifunctional protein LysX (lysX) from Gordonia bronchialis (strain ATCC 25592 / DSM 43247 / BCRC 13721 / JCM 3198 / KCTC 3076 / NBRC 16047 / NCTC 10667) (Rhodococcus bronchialis).